The sequence spans 183 residues: Translation initiation factor IF-3 (183 aa).

The protein belongs to the IF-3 family. As to quaternary structure, monomer.

Its subcellular location is the cytoplasm. Functionally, IF-3 binds to the 30S ribosomal subunit and shifts the equilibrium between 70S ribosomes and their 50S and 30S subunits in favor of the free subunits, thus enhancing the availability of 30S subunits on which protein synthesis initiation begins. The polypeptide is Translation initiation factor IF-3 (Aliivibrio salmonicida (strain LFI1238) (Vibrio salmonicida (strain LFI1238))).